We begin with the raw amino-acid sequence, 200 residues long: Recombination protein RecR (200 aa).

The segment at 57–72 (CRQCRTLTEQELCPQC) adopts a C4-type zinc-finger fold. The region spanning 80–175 (TQLCVVEGPT…VASRIAHGVP (96 aa)) is the Toprim domain.

This sequence belongs to the RecR family.

Functionally, may play a role in DNA repair. It seems to be involved in an RecBC-independent recombinational process of DNA repair. It may act with RecF and RecO. The polypeptide is Recombination protein RecR (Pseudomonas putida (strain ATCC 700007 / DSM 6899 / JCM 31910 / BCRC 17059 / LMG 24140 / F1)).